Here is a 626-residue protein sequence, read N- to C-terminus: MIPMRKIKLLSPRLANQIAAGEVVERPSSVIKELLENSLDAGATRLDIEIEDGGIKLMRVRDNGGGIDKDDLPLALSRHATSKIYELDDLEAVATLGFRGEALASISSVARLALVSSTSEDSAGWQVVAEGRDMETQISPAPHPRGTTVEVRDLFFNTPARRKFLRSEKTEYTHLEDVVKRLALSRFDVAFNLRHNGRAIYAWRAGDSQLEQERRVAQVCGPAFMENAVFIEMERGSLRLWGWVAQPTFSRSQADLQHFYVNGRAIRDKLVSHAVRQAYQDVLYHGRHPAFVLYLELDPSTVDVNVHPTKHEVRFRDNRTVHDFIYSSLHHALAKVRPEDTLARKAADLGEDTPGIAPYAVSPRPLVEGIAAGEFKGQGAMSFAPSTSGGYRPGYTSVSPGTIREQMHTYGELLASAEPVTARALPQTPTEDIPPLGYALAQLKGIYILAENAQGLIVVDMHAAHERITYERMKAAYAHGGLQTQPLLVPESIAVSEKEADCAEQFADIFKTLGFELQRAGPETLLIRQLPVILNRAQAEQLVRDVLSDLIEHGTSERIQHHINEILATMACHGSVRANRKLTIPEMNALLRDMEATERSGQCNHGRPTWFLQSLDELDKLFMRGQ.

This sequence belongs to the DNA mismatch repair MutL/HexB family.

This protein is involved in the repair of mismatches in DNA. It is required for dam-dependent methyl-directed DNA mismatch repair. May act as a 'molecular matchmaker', a protein that promotes the formation of a stable complex between two or more DNA-binding proteins in an ATP-dependent manner without itself being part of a final effector complex. The chain is DNA mismatch repair protein MutL from Cellvibrio japonicus (strain Ueda107) (Pseudomonas fluorescens subsp. cellulosa).